A 348-amino-acid chain; its full sequence is Phospho-2-dehydro-3-deoxyheptonate aldolase, Trp-sensitive (348 aa).

This sequence belongs to the class-I DAHP synthase family.

It carries out the reaction D-erythrose 4-phosphate + phosphoenolpyruvate + H2O = 7-phospho-2-dehydro-3-deoxy-D-arabino-heptonate + phosphate. The protein operates within metabolic intermediate biosynthesis; chorismate biosynthesis; chorismate from D-erythrose 4-phosphate and phosphoenolpyruvate: step 1/7. Functionally, stereospecific condensation of phosphoenolpyruvate (PEP) and D-erythrose-4-phosphate (E4P) giving rise to 3-deoxy-D-arabino-heptulosonate-7-phosphate (DAHP). This is Phospho-2-dehydro-3-deoxyheptonate aldolase, Trp-sensitive (aroH) from Escherichia coli O6:H1 (strain CFT073 / ATCC 700928 / UPEC).